The primary structure comprises 338 residues: Auxin-responsive protein IAA9 (338 aa).

Residues 1–25 (MSPEEELQSNVSVASSSPTSNCISR) are disordered. Residues 9 to 21 (SNVSVASSSPTSN) show a composition bias toward low complexity. The EAR-like (transcriptional repression) motif lies at 68–72 (LTLGL). The tract at residues 150–186 (ATQSVTKKDVPQNIPKGQSSTTNNSSSPPAAKAQIVG) is disordered. A compositionally biased stretch (low complexity) spans 168-180 (SSTTNNSSSPPAA). In terms of domain architecture, PB1 spans 216 to 318 (ALFVKVSMDG…VCKKLKIMKG (103 aa)).

Belongs to the Aux/IAA family. As to quaternary structure, homodimers and heterodimers. Interacts with TPL. Post-translationally, phosphorylated by phytochrome A in vitro. Highly expressed in the whole plant.

The protein localises to the nucleus. Functionally, aux/IAA proteins are short-lived transcriptional factors that function as repressors of early auxin response genes at low auxin concentrations. Repression is thought to result from the interaction with auxin response factors (ARFs), proteins that bind to the auxin-responsive promoter element (AuxRE). Formation of heterodimers with ARF proteins may alter their ability to modulate early auxin response genes expression. This chain is Auxin-responsive protein IAA9 (IAA9), found in Arabidopsis thaliana (Mouse-ear cress).